We begin with the raw amino-acid sequence, 176 residues long: ATP-dependent protease subunit HslV (176 aa).

Thr-5 is an active-site residue. Positions 161, 164, and 167 each coordinate Na(+).

Belongs to the peptidase T1B family. HslV subfamily. A double ring-shaped homohexamer of HslV is capped on each side by a ring-shaped HslU homohexamer. The assembly of the HslU/HslV complex is dependent on binding of ATP.

The protein resides in the cytoplasm. It catalyses the reaction ATP-dependent cleavage of peptide bonds with broad specificity.. Its activity is regulated as follows. Allosterically activated by HslU binding. Its function is as follows. Protease subunit of a proteasome-like degradation complex believed to be a general protein degrading machinery. The chain is ATP-dependent protease subunit HslV from Caldicellulosiruptor saccharolyticus (strain ATCC 43494 / DSM 8903 / Tp8T 6331).